Consider the following 177-residue polypeptide: MTDRILIARIGAPHGVKGEVRLFAFGEDPLALKRYPLTDESGARRFKVQSLRAAKDHFVARLEGIADRNAAEALTNTDLFVPRDALPAAEDEDTFYHADLMGLRVEDQSGALLGTVLAMHDFGAGDVLEYTPEGGGRTLLLPFTKAAVPVVDVPGGRIVVVPDTNPDETPPEDADQA.

In terms of domain architecture, PRC barrel spans 92–166 (EDTFYHADLM…RIVVVPDTNP (75 aa)).

It belongs to the RimM family. In terms of assembly, binds ribosomal protein uS19.

The protein localises to the cytoplasm. In terms of biological role, an accessory protein needed during the final step in the assembly of 30S ribosomal subunit, possibly for assembly of the head region. Essential for efficient processing of 16S rRNA. May be needed both before and after RbfA during the maturation of 16S rRNA. It has affinity for free ribosomal 30S subunits but not for 70S ribosomes. In Azorhizobium caulinodans (strain ATCC 43989 / DSM 5975 / JCM 20966 / LMG 6465 / NBRC 14845 / NCIMB 13405 / ORS 571), this protein is Ribosome maturation factor RimM.